The following is a 251-amino-acid chain: Ell1-associated factor 1 (251 aa).

Disordered regions lie at residues 110 to 187 (SKTV…DMEV) and 201 to 251 (FDQE…EDED). Residues 112–123 (TVPSNAITQSDN) show a composition bias toward polar residues. Low complexity predominate over residues 124 to 135 (SQISESKSTSQS). Over residues 143 to 157 (RRKEKELEASKDGKI) the composition is skewed to basic and acidic residues. Polar residues-rich tracts occupy residues 204-220 (EFNS…TASK) and 236-251 (SSAQ…EDED). At Ser247 the chain carries Phosphoserine.

This sequence belongs to the EAF family. Forms a stable heterodimer with ell1. Ell1-eaf1 complex interacts with RNA polymerase II.

The protein resides in the nucleus. Its function is as follows. Activates transcription elongation by RNA polymerase II and pyrophosphorolysis as a complex with ell1. Acts as a transcriptional transactivator of ell1 elongation activities. This chain is Ell1-associated factor 1 (eaf1), found in Schizosaccharomyces pombe (strain 972 / ATCC 24843) (Fission yeast).